The sequence spans 228 residues: MIISTGNDDLDRRLGGIPYPASIMIEGDHGTGKSVLSAQFVLGFLLSDKKGYVITTEQTTKDYLIKMKEIKIDLIPYFIRGKLRIAPLNTKKFNWNSSLAEKILDVIVNFIRSKNIDFIVIDSLSILAAFSKEKQLLQFMKDIRVLVNTGKMILFTIHPDTFDEEMKSKITSIVDVYLKLSAATIGGRRVKILERVKTTGGISGSDTISFDVDPALGIKVVPLSLSRA.

Glycine 30, threonine 31, lysine 33, serine 34, valine 35, glutamate 57, and lysine 191 together coordinate ATP. Residue serine 34 participates in Mg(2+) binding. A Mg(2+)-binding site is contributed by glutamate 57.

Belongs to the FlaH family. As to quaternary structure, the S.acidocaldarius archaellum assembly machinery and its filament consist of seven proteins (FlaB, FlaF, FlaG, FlaH, FlaI, FlaJ and FlaX). Interacts directly with the FlaX ring and the motor ATPase FlaI. Monomers, which can probably form homohexamers upon binding to ATP. In vitro, FlaH assembles as a second ring inside the FlaX ring.

The protein localises to the archaeal flagellum. It localises to the cytoplasm. In terms of biological role, component of the archaellum. FlaX, FlaH and FlaI form the core cytoplasmic motor complex of the crenarchaeal archaellum. FlaH binds ATP with high affinity but lacks detectable in vitro ATPase activity. ATP binding is essential for interaction with FlaI and for archaellum assembly. The sequence is that of Archaeal flagellar ATP-binding protein FlaH from Sulfolobus acidocaldarius (strain ATCC 33909 / DSM 639 / JCM 8929 / NBRC 15157 / NCIMB 11770).